We begin with the raw amino-acid sequence, 1031 residues long: Protein draper (1031 aa).

Positions 1-16 (MLPVILIACLAQLVLA) are cleaved as a signal peptide. Over 17–800 (QADLKDLDGP…DQSENSSRAS (784 aa)) the chain is Extracellular. In terms of domain architecture, EMI spans 25 to 100 (GPNICKRREL…YIASAGECVP (76 aa)). Cystine bridges form between Cys29-Cys88, Cys55-Cys62, Cys87-Cys98, Cys102-Cys111, Cys106-Cys117, and Cys119-Cys128. An N-linked (GlcNAc...) asparagine glycan is attached at Asn73. EGF-like domains lie at 99–129 (VPHCSEPCQHGRCISPEKCKCDHGYGGPACD), 137–172 (YGRNCSMQCDCLNNAVCEPFSGDCECAKGYTGARCA), 180–215 (FGANCSEKCRCENGGKCHHVSGECQCAPGFTGPLCD), 223–258 (HGAQCQQDCPCQNDGKCQPETGACMCNPGWTGDVCA), 266–301 (YGPGCQESCECYKGAPCHHITGQCECPPGYRGERCF), and 309–344 (YGFNCSMTCDCANDAMCDRANGTCICNPGWTGAKCA). N-linked (GlcNAc...) asparagine glycosylation is present at Asn140. Disulfide bonds link Cys141-Cys153, Cys147-Cys160, and Cys162-Cys171. N-linked (GlcNAc...) asparagine glycosylation is present at Asn183. 9 cysteine pairs are disulfide-bonded: Cys184–Cys196, Cys190–Cys203, Cys205–Cys214, Cys227–Cys239, Cys233–Cys246, Cys248–Cys257, Cys270–Cys282, Cys276–Cys289, and Cys291–Cys300. A glycan (N-linked (GlcNAc...) asparagine) is linked at Asn312. Disulfide bonds link Cys313–Cys325, Cys319–Cys332, and Cys334–Cys343. Asn329 carries N-linked (GlcNAc...) asparagine glycosylation. Residue Asn358 is glycosylated (N-linked (GlcNAc...) asparagine). EGF-like domains lie at 398 to 433 (YGPNCELTCNCKNGAKCSPVNGTCLCAPGWRGPTCE) and 484 to 519 (FGQDCAKVCDCHNNAACNPQNGSCTCAAGWTGERCE). Disulfide bonds link Cys402/Cys414, Cys408/Cys421, Cys423/Cys432, Cys488/Cys500, Cys494/Cys507, and Cys509/Cys518. N-linked (GlcNAc...) asparagine glycosylation is present at Asn418. Asn504 carries N-linked (GlcNAc...) asparagine glycosylation. N-linked (GlcNAc...) asparagine glycans are attached at residues Asn540, Asn584, and Asn585. The region spanning 572–607 (YGENCDKVCRCLNNSSCDPDSGNCICSAGWTGADCA) is the EGF-like 9 domain. Disulfide bonds link Cys576-Cys588, Cys582-Cys595, and Cys597-Cys606. N-linked (GlcNAc...) asparagine glycosylation occurs at Asn630. The 36-residue stretch at 660 to 695 (YGPGCKLKCNCEHGGECNHVTGQCQCLPGWTGSNCN) folds into the EGF-like 10 domain. Disulfide bonds link Cys664/Cys676, Cys670/Cys683, and Cys685/Cys694. Residues Asn695 and Asn795 are each glycosylated (N-linked (GlcNAc...) asparagine). A helical transmembrane segment spans residues 801–821 (VALTLVLMTLFACIIFAVFIY). At 822–1031 (YRRRVSNLKT…SPSSSPKFLK (210 aa)) the chain is on the cytoplasmic side. Residues 940–954 (KEGYKDPDEYDHLDY) show a composition bias toward basic and acidic residues. Disordered stretches follow at residues 940–964 (KEGYKDPDEYDHLDYSRPSTSQKPH) and 989–1031 (TVLL…KFLK). The span at 1009–1031 (DNTNTNLDNVSTASPSSSPKFLK) shows a compositional bias: polar residues.

This sequence belongs to the MEGF family. As to quaternary structure, interacts (via the cytoplasmic domain) with shark; this is required for the recruitment of drpr and glial cells to severed axons and for the phagocytosis of axonal debris by glial cells following axon injury. Interacts with ced-6. Interacts with csw; this results in dephosphorylation of drpr isoform A which is required for the inhibition of glial cell engulfment of axonal debris produced following axonal injury. Post-translationally, phosphorylated on tyrosine residues. Phosphorylation is induced by binding to prtp. It is also induced by binding to the membrane phospholipid phosphatidylserine. Phosphorylation may be mediated directly or indirectly by Src42a and is required for interaction with shark. Dephosphorylated by csw which is required for the inhibition of glial cell engulfment of axonal debris produced following axonal injury. In terms of tissue distribution, expressed in adult head (at protein level). Expressed in glia, macrophages and ectoderm (at protein level). Detected in glia around the mushroom body dorsal lobe and in glial processes infiltrating the medial lobe (at protein level). Expressed in adult brain glia including antennal lobe glia (at protein level). Expressed in the larval fat body (at protein level). Expressed in the ovary (at protein level). Isoform B: Predominant isoform in adult glia.

The protein resides in the cell membrane. The protein localises to the cell projection. It localises to the axon. It is found in the cytoplasm. Its subcellular location is the postsynaptic cell membrane. The protein resides in the cell cortex. The protein localises to the phagocytic cup. It localises to the cytoplasmic vesicle. It is found in the phagosome. Its function is as follows. Receptor which is involved in the phagocytosis of a variety of cells including apoptotic cells, severed and pruned axons, degenerating dendrites, salivary gland cells, germline cells and bacteria. Binds to the ligand prtp which relocates from the endoplasmic reticulum to the cell surface during apoptosis. Ligand-binding may promote tyrosine phosphorylation mediated by Src42a, interaction with shark and subsequent activation of phagocytosis. Also binds to the membrane phospholipid phosphatidylserine which is exposed on the surface of apoptotic cells. Required for the phagocytosis of apoptotic cells by macrophages. Also required for the phagocytosis of apoptotic neurons by glial cells in the embryonic nervous system. Acts downstream of NimC4/simu in the glial phagocytosis of apoptotic neurons. Plays a role in the glial engulfment of larval axons as part of programmed axon pruning during metamorphosis. Also mediates glial cell clearance of severed axons following axonal injury. Required for the engulfment of degenerating dendrites by epidermal cells. Required in the ovary for the engulfment and subsequent processing of dying germline cells by follicular epithelial cells through activation of the JNK/bsk pathway. Plays a role in neuromuscular junction development by mediating the clearance of presynaptic debris and immature boutons which are shed by growing synapses. Required for larval salivary gland cell death which occurs following a rise in steroid levels after puparium formation. Also involved in bacterial phagocytosis. Required for hemocyte phagocytosis of the Gram-positive bacterium S.aureus. Lipoteichoic acid, synthesized by the S.aureus lipoteichoic acid synthase ltaS, acts as a ligand for drpr in this process. Together with Src42a and shark, promotes the migration of macrophages to sites of wounding as part of a signaling cascade where Scr42a detects production of hydrogen peroxide at wound sites which triggers phosphorylation of drpr and subsequent recruitment and activation of shark. Also required for macrophage priming which occurs following phagocytosis of apoptotic cells and ensures that macrophages develop a form of molecular memory that allows them to later mount an inflammatory response to tissue damage and bacterial infection. Is also an essential factor in the regulation of muscle development and myogenesis, and as a consequence is required for normal locomotion. Likely to control the balance between skeletal muscle satellite cells proliferation and differentiation through regulation of the notch signaling pathway. Promotes engulfment of axonal debris by glial cells following axonal injury. In terms of biological role, potently inhibits glial cell engulfment of axonal debris produced following axonal injury. The protein is Protein draper of Drosophila melanogaster (Fruit fly).